Consider the following 424-residue polypeptide: F-box protein At2g38590 (424 aa).

One can recognise an F-box domain in the interval 2 to 47 (TTMISNLPRVLIEEIFFRVPLKSLRAVRLTCKSWNTLSKSRSFRKL).

The sequence is that of F-box protein At2g38590 from Arabidopsis thaliana (Mouse-ear cress).